Reading from the N-terminus, the 232-residue chain is Large ribosomal subunit protein uL16m (232 aa).

The transit peptide at 1 to 41 (MFPYLTRMNLSIKMGGLTLKESSPNAFLNNTTIARRFKHEY) directs the protein to the mitochondrion.

This sequence belongs to the universal ribosomal protein uL16 family. As to quaternary structure, component of the mitochondrial large ribosomal subunit (mt-LSU). Mature yeast 74S mitochondrial ribosomes consist of a small (37S) and a large (54S) subunit. The 37S small subunit contains a 15S ribosomal RNA (15S mt-rRNA) and 34 different proteins. The 54S large subunit contains a 21S rRNA (21S mt-rRNA) and 46 different proteins.

The protein resides in the mitochondrion. Component of the mitochondrial ribosome (mitoribosome), a dedicated translation machinery responsible for the synthesis of mitochondrial genome-encoded proteins, including at least some of the essential transmembrane subunits of the mitochondrial respiratory chain. The mitoribosomes are attached to the mitochondrial inner membrane and translation products are cotranslationally integrated into the membrane. The protein is Large ribosomal subunit protein uL16m (MRPL16) of Saccharomyces cerevisiae (strain ATCC 204508 / S288c) (Baker's yeast).